The sequence spans 693 residues: Elongation factor G (693 aa).

Residues 8 to 282 form the tr-type G domain; the sequence is EKTRNIGIMA…AVIDYLPSPL (275 aa). Residues 17-24, 81-85, and 135-138 contribute to the GTP site; these read AHIDAGKT, DTPGH, and NKMD.

Belongs to the TRAFAC class translation factor GTPase superfamily. Classic translation factor GTPase family. EF-G/EF-2 subfamily.

Its subcellular location is the cytoplasm. In terms of biological role, catalyzes the GTP-dependent ribosomal translocation step during translation elongation. During this step, the ribosome changes from the pre-translocational (PRE) to the post-translocational (POST) state as the newly formed A-site-bound peptidyl-tRNA and P-site-bound deacylated tRNA move to the P and E sites, respectively. Catalyzes the coordinated movement of the two tRNA molecules, the mRNA and conformational changes in the ribosome. The sequence is that of Elongation factor G from Staphylococcus carnosus (strain TM300).